The following is a 170-amino-acid chain: Alpha-crystallin A chain (170 aa).

At Met1 the chain carries N-acetylmethionine. The required for complex formation with BFSP1 and BFSP2 stretch occupies residues 1–63 (MDVTIQQPWF…RTALDSGISE (63 aa)). Gln6 is subject to Deamidated glutamine; partial. Ser45 is modified (phosphoserine). Gln50 is modified (deamidated glutamine; partial). A sHSP domain is found at 52 to 161 (LFRTALDSGI…SERPIPVSRE (110 aa)). Lys70 and Lys99 each carry N6-acetyllysine. His100 contacts Zn(2+). Deamidated asparagine; partial is present on Asn101. Glu102, His107, and His151 together coordinate Zn(2+). Residues 144 to 170 (PKIVDPSHSERPIPVSREEKPSSAPSS) are disordered. The span at 148–164 (DPSHSERPIPVSREEKP) shows a compositional bias: basic and acidic residues. An O-linked (GlcNAc) serine glycan is attached at Ser159.

Belongs to the small heat shock protein (HSP20) family. In terms of assembly, heteromer composed of three CRYAA and one CRYAB subunits. Inter-subunit bridging via zinc ions enhances stability, which is crucial as there is no protein turn over in the lens. Can also form homodimers and homotetramers (dimers of dimers) which serve as the building blocks of homooligomers. Within homooligomers, the zinc-binding motif is created from residues of 3 different molecules. His-100 and Glu-102 from one molecule are ligands of the zinc ion, and His-107 and His-151 residues from additional molecules complete the site with tetrahedral coordination geometry. Part of a complex required for lens intermediate filament formation composed of BFSP1, BFSP2 and CRYAA. In terms of processing, acetylation at Lys-70 may increase chaperone activity. Post-translationally, undergoes age-dependent proteolytical cleavage at the C-terminus.

It is found in the cytoplasm. Its subcellular location is the nucleus. Functionally, contributes to the transparency and refractive index of the lens. Acts as a chaperone, preventing aggregation of various proteins under a wide range of stress conditions. Required for the correct formation of lens intermediate filaments as part of a complex composed of BFSP1, BFSP2 and CRYAA. The protein is Alpha-crystallin A chain (CRYAA) of Bradypus variegatus (Brown-throated three-fingered sloth).